Here is a 138-residue protein sequence, read N- to C-terminus: ATP synthase epsilon chain (138 aa).

Belongs to the ATPase epsilon chain family. As to quaternary structure, F-type ATPases have 2 components, CF(1) - the catalytic core - and CF(0) - the membrane proton channel. CF(1) has five subunits: alpha(3), beta(3), gamma(1), delta(1), epsilon(1). CF(0) has three main subunits: a, b and c.

It localises to the cell inner membrane. Produces ATP from ADP in the presence of a proton gradient across the membrane. The polypeptide is ATP synthase epsilon chain (Blochmanniella floridana).